The chain runs to 212 residues: Bilin biosynthesis protein PecF (212 aa).

The protein belongs to the CpcE/RpcE/PecE family.

Its function is as follows. An enzyme involved in the biosynthesis of bilin. The chain is Bilin biosynthesis protein PecF (pecF) from Mastigocladus laminosus (Fischerella sp.).